The chain runs to 949 residues: Translation initiation factor IF-2 (949 aa).

3 disordered regions span residues 61 to 122 (IQAN…PIIK), 139 to 159 (VENT…QKLQ), and 171 to 284 (LTQS…NKSH). 2 stretches are compositionally biased toward basic and acidic residues: residues 112-122 (KKKEAPAPIIK) and 150-159 (QIEKAKQKLQ). The segment covering 174–190 (SNTNTTNNANSASNVSN) has biased composition (low complexity). Basic and acidic residues predominate over residues 191 to 208 (AKKEISEVKKQEQEIKRH). Over residues 209-220 (ENIKRRTGFRVI) the composition is skewed to basic residues. A compositionally biased stretch (basic and acidic residues) spans 249–264 (EDIKKEWQEKDKQETK). A tr-type G domain is found at 448 to 617 (ERPPVVTIMG…LIQADIMELK (170 aa)). Positions 457–464 (GHVDHGKT) are G1. GTP is bound at residue 457 to 464 (GHVDHGKT). The tract at residues 482 to 486 (GITQH) is G2. A G3 region spans residues 503-506 (DTPG). GTP is bound by residues 503-507 (DTPGH) and 557-560 (NKMD). The tract at residues 557 to 560 (NKMD) is G4. The segment at 593-595 (SAK) is G5.

This sequence belongs to the TRAFAC class translation factor GTPase superfamily. Classic translation factor GTPase family. IF-2 subfamily.

Its subcellular location is the cytoplasm. In terms of biological role, one of the essential components for the initiation of protein synthesis. Protects formylmethionyl-tRNA from spontaneous hydrolysis and promotes its binding to the 30S ribosomal subunits. Also involved in the hydrolysis of GTP during the formation of the 70S ribosomal complex. This is Translation initiation factor IF-2 (infB) from Helicobacter pylori (strain J99 / ATCC 700824) (Campylobacter pylori J99).